We begin with the raw amino-acid sequence, 161 residues long: Ribonuclease P protein component 2 (161 aa).

This sequence belongs to the eukaryotic/archaeal RNase P protein component 2 family. As to quaternary structure, consists of a catalytic RNA component and at least 4-5 protein subunits.

The protein localises to the cytoplasm. The catalysed reaction is Endonucleolytic cleavage of RNA, removing 5'-extranucleotides from tRNA precursor.. Functionally, part of ribonuclease P, a protein complex that generates mature tRNA molecules by cleaving their 5'-ends. The chain is Ribonuclease P protein component 2 from Natronomonas pharaonis (strain ATCC 35678 / DSM 2160 / CIP 103997 / JCM 8858 / NBRC 14720 / NCIMB 2260 / Gabara) (Halobacterium pharaonis).